A 96-amino-acid chain; its full sequence is UPF0235 protein Sputw3181_1321 (96 aa).

It belongs to the UPF0235 family.

The polypeptide is UPF0235 protein Sputw3181_1321 (Shewanella sp. (strain W3-18-1)).